Reading from the N-terminus, the 96-residue chain is Co-chaperonin GroES (96 aa).

Belongs to the GroES chaperonin family. As to quaternary structure, heptamer of 7 subunits arranged in a ring. Interacts with the chaperonin GroEL.

The protein resides in the cytoplasm. Together with the chaperonin GroEL, plays an essential role in assisting protein folding. The GroEL-GroES system forms a nano-cage that allows encapsulation of the non-native substrate proteins and provides a physical environment optimized to promote and accelerate protein folding. GroES binds to the apical surface of the GroEL ring, thereby capping the opening of the GroEL channel. The polypeptide is Co-chaperonin GroES (Tremblaya princeps).